The chain runs to 586 residues: Madf and zinc finger protein 1 (586 aa).

The interval 161-194 (FMSEDDLAPPRKPGRPPRRTRPGQVFKFKVSFIR) is involved in interaction with Cp190. The segment at residues 201–292 (HLIQAYKEHP…KCEFLSVAPV (92 aa)) is a DNA-binding region (MADF 1). Residues 294 to 319 (TPRENEEDNDLTAIKLNFKEENLITT) form an involved in interaction with Cp190 region. Residues 320–413 (SFIETYANYP…MCSFLPAKGS (94 aa)) constitute a DNA-binding region (MADF 2). C2H2-type zinc fingers lie at residues 418–441 (LYCD…VKAH), 448–471 (YLCS…LRSH), 476–498 (LKCQ…TLIH), 504–527 (HVCD…NGVH), 533–555 (YSCN…IKGH), and 561–583 (KKCE…RRSH).

In terms of assembly, interacts (via regions flanking MADF domain 1) with Cp190 (via regions between the BTB domain and first zinc finger domain); the interaction is probably direct and is essential for protein function.

It is found in the nucleus. It localises to the chromosome. The protein localises to the nucleoplasm. Functionally, chromatin-binding protein involved in the organization of active promoters and insulators. Essential for the activity of heterochromatin promoters; primarily binds to specific motifs within promoters of housekeeping genes. May also associate to a lesser extent with promoters in euchromatin. Mediates recruitment of Cp190, a multifunctional protein involved in the recruitment of transcription complexes, the creation of open chromatin regions and the activity of insulators. Cooperates with pita and su(Hw) to recruit Cp190 and regulate insulator function at the front-ultraabdominal (Fub) boundary. May cooperate with other C2H2 zinc finger proteins, such as M1BP, to recruit CP190 to promoters. May be involved in cellular organization and development of the eye. The protein is Madf and zinc finger protein 1 of Drosophila melanogaster (Fruit fly).